The following is a 414-amino-acid chain: 11-beta-hydroxysteroid dehydrogenase type 2 (414 aa).

4 consecutive transmembrane segments (helical) span residues 3-23 (DFAV…GGAV), 26-46 (FLAF…ATLL), 52-72 (ALCM…WLYF), and 341-361 (YYAG…PLSI). The disordered stretch occupies residues 382–414 (KQQGLSPNDNNNSIKENMNDSSSNNSNFTKCID). The span at 384–397 (QGLSPNDNNNSIKE) shows a compositional bias: polar residues.

Belongs to the short-chain dehydrogenases/reductases (SDR) family. As to expression, broadly expressed in peripheral (brain, gill, eye, heart, liver, head kidney, posterior kidney, and gut).

The protein localises to the membrane. The enzyme catalyses an 11beta-hydroxysteroid + NAD(+) = an 11-oxosteroid + NADH + H(+). The catalysed reaction is cortisol + NAD(+) = cortisone + NADH + H(+). It carries out the reaction corticosterone + NAD(+) = 11-dehydrocorticosterone + NADH + H(+). It catalyses the reaction 11beta,17beta-dihydroxyandrost-4-ene-3-one + NAD(+) = 17beta-hydroxyandrost-4-ene-3,11-dione + NADH + H(+). The enzyme catalyses 11beta-hydroxyandrost-4-ene-3,17-dione + NAD(+) = androst-4-ene-3,11,17-trione + NADH + H(+). It functions in the pathway steroid metabolism. In terms of biological role, catalyzes the conversion of biologically active 11beta-hydroxyglucocorticoids (11beta-hydroxysteroid) such as cortisol, to inactive 11-ketoglucocorticoids (11-oxosteroid) such as cortisone, in the presence of NAD(+). Cortisol is the primary glucocorticoid in teleosts and is released to increase glucose bioavailability in order to meet the increased energy demands in response to stress. Functions as a dehydrogenase (oxidase), thereby decreasing the concentration of active glucocorticoids, regulating the hypothalamus-pituitary-interrenal (HPI) axis function in adult fish. Decreasing the excess glucocorticoids may be of relevance to brain function and neural proliferation. Plays a key role by catalyzing the oxidation of 11beta-hydroxytestosterone (11beta,17beta-dihydroxyandrost-4-ene-3-one) to 11-ketotestosterone (17beta-hydroxyandrost-4-ene-3,11-dione), the major fish androgen, that activates androgen receptor transcriptional activity. Catalyzes the conversion of 11beta-hydroxyandrostenedione (11beta-hydroxyandrost-4-ene-3,17-dione) to 11-ketoandrostenedione (androst-4-ene-3,11,17-trione), which can be further metabolized to 11-ketotestosterone. Exerts a dual role in fish by inactivating glucocorticoids and activating androgens. The polypeptide is 11-beta-hydroxysteroid dehydrogenase type 2 (hsd11b2) (Danio rerio (Zebrafish)).